The primary structure comprises 377 residues: 2-aminoethylphosphonate--pyruvate transaminase (377 aa).

The residue at position 194 (Lys194) is an N6-(pyridoxal phosphate)lysine.

The protein belongs to the class-V pyridoxal-phosphate-dependent aminotransferase family. PhnW subfamily. Homodimer. Requires pyridoxal 5'-phosphate as cofactor.

It catalyses the reaction (2-aminoethyl)phosphonate + pyruvate = phosphonoacetaldehyde + L-alanine. Its function is as follows. Involved in phosphonate degradation. The protein is 2-aminoethylphosphonate--pyruvate transaminase of Cupriavidus taiwanensis (strain DSM 17343 / BCRC 17206 / CCUG 44338 / CIP 107171 / LMG 19424 / R1) (Ralstonia taiwanensis (strain LMG 19424)).